A 1715-amino-acid chain; its full sequence is Sodium channel protein type 4 subunit alpha B (1715 aa).

Topologically, residues 1-126 are cytoplasmic; sequence MGTLLPPVGS…IFAIKILVHS (126 aa). Residues 108–431 form an I repeat; that stretch reads LLSPFNSMRI…VVAMAYAEQN (324 aa). Residues 127–145 form a helical membrane-spanning segment; that stretch reads LFSLFIMATILTNCVFMTL. Topologically, residues 146–152 are extracellular; sequence SDPPAWS. A helical transmembrane segment spans residues 153-173; that stretch reads KTVEYVFTFIYTFEATIKVVS. Residues 174–187 lie on the Cytoplasmic side of the membrane; that stretch reads RGFCVGQFTFLKDP. Residues 188–205 traverse the membrane as a helical segment; it reads WNWLDFMVISMAYLTELV. The Extracellular portion of the chain corresponds to 206 to 211; that stretch reads DLGNVS. An N-linked (GlcNAc...) asparagine glycan is attached at asparagine 209. The chain crosses the membrane as a helical span at residues 212 to 228; it reads VLRTFRVLRALKTITVI. Residues 229–247 are Cytoplasmic-facing; sequence PGLKTIVGALIQSVKKLAD. Residues 248-267 form a helical membrane-spanning segment; the sequence is AMVLTVFCLSVFALIGLQLF. Over 268-368 the chain is Extracellular; it reads MGNLRQKCVL…PNYGYTSYDS (101 aa). The cysteines at positions 275 and 337 are disulfide-linked. Residues asparagine 284, asparagine 304, and asparagine 339 are each glycosylated (N-linked (GlcNAc...) asparagine). A disulfide bridge connects residues cysteine 346 and cysteine 352. Positions 369 to 393 form an intramembrane region, pore-forming; that stretch reads FGWAFLALFRLMTQDFWENLFQLTL. Over 394-400 the chain is Extracellular; sequence RAAGKTY. Residues 401-421 traverse the membrane as a helical segment; it reads MIFFVVVIFLGSFYLINLILA. The Cytoplasmic portion of the chain corresponds to 422 to 515; the sequence is VVAMAYAEQN…RCLSAIVMDP (94 aa). An II repeat occupies 497–768; it reads CCSCWRHLKR…QIAVNRIKRA (272 aa). A helical membrane pass occupies residues 516–534; that stretch reads FVDLGITICIILNTIFMAM. Residues 535 to 545 are Extracellular-facing; sequence EHYPMSADFEE. The chain crosses the membrane as a helical span at residues 546 to 565; the sequence is LLSVGNLVFTGIFTCEMVLK. Over 566-579 the chain is Cytoplasmic; that stretch reads ILAMDPYFYFQVGW. A helical transmembrane segment spans residues 580 to 599; the sequence is NIFDSIIVTMSLVELGLANV. Residues 600 to 601 are Extracellular-facing; the sequence is QG. Residues 602 to 619 form a helical membrane-spanning segment; it reads LSVLRSFRLMRVFKLAKS. Residues 620–635 are Cytoplasmic-facing; it reads WPTLNMLIKIIGNSVG. Residues 636–654 form a helical membrane-spanning segment; it reads ALGNLTLVLAIIVFIFAVV. Residues 655-683 lie on the Extracellular side of the membrane; it reads GMQLFGKNYKDCVCRISEDCKLPRWHMND. Cysteine 668 and cysteine 674 form a disulfide bridge. The pore-forming intramembrane region spans 684–704; sequence FFHAFLIIFRVLCGEWIDTMW. The Extracellular portion of the chain corresponds to 705–715; sequence DCMEVSGQTMC. Cysteine 706 and cysteine 715 form a disulfide bridge. A helical transmembrane segment spans residues 716–734; the sequence is LIVYMMVLVIGNLVVLNLF. Over 735–915 the chain is Cytoplasmic; the sequence is LALLLSSFSG…ACFIIVENNY (181 aa). Positions 824–865 are disordered; that stretch reads EAESDSEDSDDDDVDEDKHSRCDESSFCSTVQDPEVKENEAD. A compositionally biased stretch (acidic residues) spans 825 to 838; that stretch reads AESDSEDSDDDDVD. Residues 896-1211 form an III repeat; sequence KGKVWCNIRR…KKYYNAMKKL (316 aa). The chain crosses the membrane as a helical span at residues 916–933; sequence FESFIVFMILLSSGALAF. The Extracellular portion of the chain corresponds to 934–946; that stretch reads EDIYLEKHQLIKT. The chain crosses the membrane as a helical span at residues 947 to 965; it reads ILEYADKVFTYVFVVEMVL. Topologically, residues 966 to 979 are cytoplasmic; the sequence is KWFAYGFKSYFSNA. A helical transmembrane segment spans residues 980-998; sequence WCWLDFLIVDVSLVSLTAN. Residues 999 to 1006 are Extracellular-facing; it reads ILGYSELG. A helical transmembrane segment spans residues 1007-1025; sequence AIKSLRTLRALRPLRALSR. The Cytoplasmic segment spans residues 1026–1042; the sequence is FEGMRVVVNALVGAVPS. A helical transmembrane segment spans residues 1043–1062; it reads IFNVLLVCLIFWLIFSIMGV. Residues 1063-1115 are Extracellular-facing; sequence NLFAGKFSYCFNETSQEQFDKKIVNNKTECIALIEANFTEVRWKNLKVNYDNV. Cysteine 1072 and cysteine 1092 are disulfide-bonded. 2 N-linked (GlcNAc...) asparagine glycosylation sites follow: asparagine 1074 and asparagine 1088. Positions 1116 to 1137 form an intramembrane region, pore-forming; sequence GIGYLSLLQVATFKGWMEIMYA. Topologically, residues 1138-1154 are extracellular; it reads AVDSRDVESQPIYEVNI. Residues 1155-1176 form a helical membrane-spanning segment; the sequence is YMYLYFVIFIIFGSFFTLNLFI. Topologically, residues 1177–1239 are cytoplasmic; the sequence is GVIIDNFNQQ…LVFDLVTKQI (63 aa). Residues 1195–1197 are important for rapid channel inactivation; sequence IFM. An IV repeat occupies 1220 to 1517; it reads VPRPENALQG…WEKFDPDATQ (298 aa). Residues 1240–1257 form a helical membrane-spanning segment; sequence FDVFIMVLICLNMVTMMV. The Extracellular portion of the chain corresponds to 1258–1268; it reads ETDEQTKEKED. Residues 1269-1287 form a helical membrane-spanning segment; it reads ILYWINVIFIVIFTTECIL. Over 1288–1299 the chain is Cytoplasmic; that stretch reads KTIALRRHYFSI. Residues 1300-1317 traverse the membrane as a helical segment; the sequence is GWNVFDFVVVILSILGLL. The Extracellular segment spans residues 1318 to 1330; sequence LADIIEKYFVSPT. Residues 1331–1347 traverse the membrane as a helical segment; that stretch reads LFRVIRLARIGRVLRLI. Residues 1348 to 1366 lie on the Cytoplasmic side of the membrane; the sequence is RGAKGIRTLLFALMMSLPA. Residues 1367–1384 form a helical membrane-spanning segment; that stretch reads LFNIGLLLFLIMFIFSIF. Residues 1385–1406 lie on the Extracellular side of the membrane; it reads GMSNFAYVKKEAMIDDMFNFET. The segment at residues 1407–1429 is an intramembrane region (pore-forming); it reads FGNSMICLFMITTSAGWDGLLSP. Topologically, residues 1430–1458 are extracellular; the sequence is IMNKPPDCDPDLENPGTTVRGNCGSPAIG. Cysteine 1437 and cysteine 1452 form a disulfide bridge. A helical transmembrane segment spans residues 1459-1481; sequence IVFFSTYIIMSFLVVVNMYIAII. Residues 1482–1715 lie on the Cytoplasmic side of the membrane; sequence LENFNVATEE…LGTSERESLV (234 aa). Residues 1611 to 1640 enclose the IQ domain; it reads EEVAARVIQRAYRKYLLQRTVRLASFTYRE.

The protein belongs to the sodium channel (TC 1.A.1.10) family. Nav1.4/SCN4A subfamily. In terms of assembly, voltage-gated sodium (Nav) channels consist of an ion-conducting alpha subunit which is functional on its own associated with regulatory beta subunits.

The protein localises to the cell membrane. The catalysed reaction is Na(+)(in) = Na(+)(out). Pore-forming subunit of a voltage-gated sodium (Nav) channel that directly mediates the depolarizing phase of action potentials in excitable membranes. Navs, also called VGSCs (voltage-gated sodium channels) or VDSCs (voltage-dependent sodium channels), operate by switching between closed and open conformations depending on the voltage difference across the membrane. In the open conformation they allow Na(+) ions to selectively pass through the pore, along their electrochemical gradient. The influx of Na+ ions provokes membrane depolarization, initiating the propagation of electrical signals throughout cells and tissues. The sequence is that of Sodium channel protein type 4 subunit alpha B (scn4ab) from Tetraodon nigroviridis (Spotted green pufferfish).